A 281-amino-acid polypeptide reads, in one-letter code: Trypsin zeta (281 aa).

Positions 1 to 23 (MSSSSWLGCLLAVLLSALALSQG) are cleaved as a signal peptide. Positions 24 to 39 (LPLLEDLDENSFPDGR) are cleaved as a propeptide — activation peptide. One can recognise a Peptidase S1 domain in the interval 40 to 279 (IVGGYVTDIA…LRPWIDAVRA (240 aa)). A disulfide bond links cysteine 73 and cysteine 89. Catalysis depends on charge relay system residues histidine 88 and aspartate 135. Intrachain disulfides connect cysteine 199–cysteine 219 and cysteine 231–cysteine 255. Residue serine 235 is the Charge relay system of the active site.

It belongs to the peptidase S1 family.

Its subcellular location is the secreted. The protein localises to the extracellular space. The enzyme catalyses Preferential cleavage: Arg-|-Xaa, Lys-|-Xaa.. This chain is Trypsin zeta (zetaTry), found in Drosophila erecta (Fruit fly).